Reading from the N-terminus, the 784-residue chain is Copal-8-ol diphosphate hydratase TPSSA9, chloroplastic (784 aa).

Arg-240 is a binding site for substrate. 2 residues coordinate Mg(2+): Asp-372 and Asp-374. The DXDD motif signature appears at 372–375 (DIDD). Arg-459 contacts substrate.

Belongs to the terpene synthase family.

Its subcellular location is the plastid. The protein localises to the chloroplast. It catalyses the reaction (2E,6E,10E)-geranylgeranyl diphosphate + H2O = 8-hydroxycopalyl diphosphate. Its pathway is secondary metabolite biosynthesis; terpenoid biosynthesis. Its function is as follows. Involved in the biosynthesis of labdane-type diterpenoid including sclareol, a diterpene-diol that is used as fragrance and flavoring, and has anticancer effects (able to kill leukemic and colon cancer cells by apoptosis). Sclareol can also be used as synthesis precursor of ambergris substitution fragance products such as ambrox. Terpene synthase that produces 8-hydroxycopalyl diphosphate from geranylgeranyl diphosphate (GGPP). The polypeptide is Copal-8-ol diphosphate hydratase TPSSA9, chloroplastic (Salvia sclarea (Clary sage)).